A 473-amino-acid polypeptide reads, in one-letter code: Photosystem II CP43 reaction center protein (473 aa).

The propeptide occupies 1–14 (MKTLYSLRRFYHVE). At Thr15 the chain carries N-acetylthreonine. Thr15 carries the phosphothreonine modification. The next 5 membrane-spanning stretches (helical) occupy residues 69–93 (LFEVAHFVPEKPMYEQGLILLPHLA), 134–155 (LLGPETLEESFPFFGYVWKDRN), 178–200 (KALYFGGVYDTWAPGGGDVRKIT), 255–275 (KPFAWARRAFVWSGEAYLSYS), and 291–312 (WFNNTAYPSEFYGPTGPEASQA). A [CaMn4O5] cluster-binding site is contributed by Glu367. Residues 447–471 (RARAAAAGFEKGIDRDFEPVLSMTP) traverse the membrane as a helical segment.

It belongs to the PsbB/PsbC family. PsbC subfamily. As to quaternary structure, PSII is composed of 1 copy each of membrane proteins PsbA, PsbB, PsbC, PsbD, PsbE, PsbF, PsbH, PsbI, PsbJ, PsbK, PsbL, PsbM, PsbT, PsbX, PsbY, PsbZ, Psb30/Ycf12, at least 3 peripheral proteins of the oxygen-evolving complex and a large number of cofactors. It forms dimeric complexes. Binds multiple chlorophylls and provides some of the ligands for the Ca-4Mn-5O cluster of the oxygen-evolving complex. It may also provide a ligand for a Cl- that is required for oxygen evolution. PSII binds additional chlorophylls, carotenoids and specific lipids. is required as a cofactor.

The protein resides in the plastid. It is found in the chloroplast thylakoid membrane. In terms of biological role, one of the components of the core complex of photosystem II (PSII). It binds chlorophyll and helps catalyze the primary light-induced photochemical processes of PSII. PSII is a light-driven water:plastoquinone oxidoreductase, using light energy to abstract electrons from H(2)O, generating O(2) and a proton gradient subsequently used for ATP formation. This is Photosystem II CP43 reaction center protein from Ipomoea purpurea (Common morning glory).